The primary structure comprises 107 residues: Early E3A 12.5 kDa protein (107 aa).

This sequence belongs to the adenoviridae E3A-2 family.

Not yet known. This chain is Early E3A 12.5 kDa protein, found in Human adenovirus C serotype 5 (HAdV-5).